A 442-amino-acid polypeptide reads, in one-letter code: SPRY domain-containing protein 3 (442 aa).

The B30.2/SPRY domain maps to 17–204 (DLNLHYRFLN…VRLHLNAELG (188 aa)). Residues 371–394 (EGEEEEEEEEEEEDGEEIEPEHEG) form a disordered region. A compositionally biased stretch (acidic residues) spans 372-390 (GEEEEEEEEEEEDGEEIEP).

In Homo sapiens (Human), this protein is SPRY domain-containing protein 3 (SPRYD3).